Consider the following 342-residue polypeptide: Phosphatidate cytidylyltransferase, mitochondrial (342 aa).

Belongs to the TAM41 family. Mg(2+) serves as cofactor. The cofactor is Co(2+). It depends on Cu(2+) as a cofactor.

It is found in the mitochondrion inner membrane. The enzyme catalyses a 1,2-diacyl-sn-glycero-3-phosphate + CTP + H(+) = a CDP-1,2-diacyl-sn-glycerol + diphosphate. It participates in phospholipid metabolism; CDP-diacylglycerol biosynthesis; CDP-diacylglycerol from sn-glycerol 3-phosphate: step 3/3. In terms of biological role, catalyzes the formation of CDP-diacylglycerol (CDP-DAG) from phosphatidic acid (PA) in the mitochondrial inner membrane. Required for the biosynthesis of the dimeric phospholipid cardiolipin, which stabilizes supercomplexes of the mitochondrial respiratory chain in the mitochondrial inner membrane. This Drosophila melanogaster (Fruit fly) protein is Phosphatidate cytidylyltransferase, mitochondrial.